Here is a 371-residue protein sequence, read N- to C-terminus: Jasmonate-induced oxygenase 2 (371 aa).

One can recognise a Fe2OG dioxygenase domain in the interval 219–320 (NIGACLRVNY…RVSLAFFYNP (102 aa)). Arginine 225 contacts jasmonate. 2-oxoglutarate contacts are provided by asparagine 227 and tyrosine 229. Fe cation-binding residues include histidine 244, aspartate 246, and histidine 301. Residues arginine 311 and serine 313 each coordinate 2-oxoglutarate. Positions 350 and 354 each coordinate jasmonate.

It belongs to the iron/ascorbate-dependent oxidoreductase family. It depends on L-ascorbate as a cofactor. Fe(2+) is required as a cofactor.

It catalyses the reaction jasmonate + 2-oxoglutarate + O2 = (1R,2R)-12-hydroxyjasmonate + succinate + CO2. Functionally, 2-oxoglutarate-dependent dioxygenase involved in the oxidation of jasmonate (JA), a stress-induced phytohormone synthesized in response to attack by pathogens and herbivores, which triggers the activation of defense responses via the JA-mediated signaling pathway. Converts JA to 12-hydroxyjasmonate (12OH-JA), an inactive form of JA. Is specific to free JA, and cannot oxidize the bioactive form jasmonoyl-L-isoleucine (JA-Ile) or other JA-amino acid conjugates. Prevents over-accumulation of JA and indirectly its bioactive form JA-Ile under stress response. Acts as a negative regulator of JA-mediated defense signaling, by contributing to 12OH-JA accumulation, which represses JA defense responses upon infection by the fungal pathogen Botrytis cinerea. Acts as a negative regulator of JA-mediated defense responses upon infestation by the herbivorous caterpillar Mamestra brassicae. May be involved in the catabolism of cytotoxic polycyclic aromatic hydrocarbons (PAHs). The chain is Jasmonate-induced oxygenase 2 from Arabidopsis thaliana (Mouse-ear cress).